Consider the following 125-residue polypeptide: UPF0102 protein PA4424 (125 aa).

This sequence belongs to the UPF0102 family.

The protein is UPF0102 protein PA4424 of Pseudomonas aeruginosa (strain ATCC 15692 / DSM 22644 / CIP 104116 / JCM 14847 / LMG 12228 / 1C / PRS 101 / PAO1).